A 2087-amino-acid polypeptide reads, in one-letter code: METESESSTLGDDSVFWLESEVIIQVTDCEEEEREEKFRKMKSSVHSEEDDFVPELHRNVHPRERPDWEETLSAMARGADVPEIPGDLTLKTCGSTASMKVKHVKKLPFTKGHFPKMAECAHFHYENVEFGSIQLSLSEEQNEVMKNGCESKELVYLVQIACQGKSWIVKRSYEDFRVLDKHLHLCIYDRRFSQLSELPRSDTLKDSPESVTQMLMAYLSRLSAIAGNKINCGPALTWMEIDNKGNHLLVHEESSINTPAVGAAHVIKRYTARAPDELTLEVGDIVSVIDMPPKVLSTWWRGKHGFQVGLFPGHCVELINQKVPQSVTNSVPKPVSKKHGKLITFLRTFMKSRPTKQKLKQRGILKERVFGCDLGEHLLNSGFEVPQVLQSCTAFIERYGIVDGIYRLSGVASNIQRLRHEFDSEHVPDLTKEPYVQDIHSVGSLCKLYFRELPNPLLTYQLYEKFSDAVSAATDEERLIKIHDVIQQLPPPHYRTLEFLMRHLSLLADYCSITNMHAKNLAIVWAPNLLRSKQIESACFSGTAAFMEVRIQSVVVEFILNHVDVLFSGRISMAMQEGAASLSRPKSLLVSSPSTKLLTLEEAQARTQAQVNSPIVTENKYIEVGEGPAALQGKFHTIIEFPLERKRPQNKMKKSPVGSWRSFFNLGKSSSVSKRKLQRNESEPSEMKAMALKGGRAEGTLRSAKSEESLTSLHAVDGDSKLFRPRRPRSSSDALSASFNGEMLGNRCNSYDNLPHDNESEEEGGLLHIPALMSPHSAEDVDLSPPDIGVASLDFDPMSFQCSPPKAESECLESGASFLDSPGYSKDKPSANKKDAETGSSQCQTPGSTASSEPVSPLQEKLSPFFTLDLSPTEDKSSKPSSFTEKVVYAFSPKIGRKLSKSPSMSISEPISVTLPPRVSEVIGTVSNTTAQNASSSTWDKCVEERDATNRSPTQIVKMKTNETVAQEAYESEVQPLDQVAAEEVELPGKEDQSVSSSQSKAVASGQTQTGAVTHDPPQDSVPVSSVSLIPPPPPPKNVARMLALALAESAQQASTQSLKRPGTSQAGYTNYGDIAVATTEDNLSSSYSAVALDKAYFQTDRPAEQFHLQNNAPGNCDHPLPETTATGDPTHSNTTESGEQHHQVDLTGNQPHQAYLSGDPEKARITSVPLDSEKSDDHVSFPEDQSGKNSMPTVSFLDQDQSPPRFYSGDQPPSYLGASVDKLHHPLEFADKSPTPPNLPSDKIYPPSGSPEENTSTATMTYMTTTPATAQMSTKEASWDVAEQPTTADFAAATLQRTHRTNRPLPPPPSQRSAEQPPVVGQVQAATNIGLNNSHKVQGVVPVPERPPEPRAMDDPASAFISDSGAAAAQCPMATAVQPGLPEKVRDGARVPLLHLRAESVPAHPCGFPAPLPPTRMMESKMIAAIHSSSADATSSSNYHSFVTASSTSVDDALPLPLPVPQPKHASQKTVYSSFARPDVTTEPFGPDNCLHFNMTPNCQYRPQSVPPHHNKLEQHQVYGARSEPPASMGLRYNTYVAPGRNASGHHSKPCSRVEYVSSLSSSVRNTCYPEDIPPYPTIRRVQSLHAPPSSMIRSVPISRTEVPPDDEPAYCPRPLYQYKPYQSSQARSDYHVTQLQPYFENGRVHYRYSPYSSSSSSYYSPDGALCDVDAYGTVQLRPLHRLPNRDFAFYNPRLQGKSLYSYAGLAPRPRANVTGYFSPNDHNVVSMPPAADVKHTYTSWDLEDMEKYRMQSIRRESRARQKVKGPVMSQYDNMTPAVQDDLGGIYVIHLRSKSDPGKTGLLSVAEGKESRHAAKAISPEGEDRFYRRHPEAEMDRAHHHGGHGSTQPEKPSLPQKQSSLRSRKLPDMGCSLPEHRAHQEASHRQFCESKNGPPYPQGAGQLDYGSKGIPDTSEPVSYHNSGVKYAASGQESLRLNHKEVRLSKEMERPWVRQPSAPEKHSRDCYKEEEHLTQSIVPPPKPERSHSLKLHHTQNVERDPSVLYQYQPHGKRQSSVTVVSQYDNLEDYHSLPQHQRGVFGGGGMGTYVPPGFPHPQSRTYATALGQGAFLPAELSLQHPETQIHAE.

Residues 131 to 245 (GSIQLSLSEE…LTWMEIDNKG (115 aa)) form the PX; atypical domain. The SH3 domain maps to 259 to 321 (PAVGAAHVIK…PGHCVELINQ (63 aa)). Residues 372–567 (CDLGEHLLNS…FILNHVDVLF (196 aa)) enclose the Rho-GAP domain. A phosphoserine mark is found at Ser-706, Ser-709, Ser-732, and Ser-738. A disordered region spans residues 818 to 858 (FLDSPGYSKDKPSANKKDAETGSSQCQTPGSTASSEPVSPL). Residues 825–837 (SKDKPSANKKDAE) show a composition bias toward basic and acidic residues. Positions 838–854 (TGSSQCQTPGSTASSEP) are enriched in polar residues. Residues Ser-852, Ser-856, and Ser-892 each carry the phosphoserine modification. Residues 927–938 (SNTTAQNASSST) show a composition bias toward low complexity. Disordered stretches follow at residues 927 to 1038 (SNTT…PPKN), 1103 to 1143 (PAEQ…EQHH), and 1169 to 1257 (VPLD…ENTS). Residue Ser-952 is modified to Phosphoserine. Low complexity-rich tracts occupy residues 994–1005 (SVSSSQSKAVAS) and 1019–1029 (QDSVPVSSVSL). Residues 1124–1138 (TTATGDPTHSNTTES) show a composition bias toward polar residues. Residues 1172–1182 (DSEKSDDHVSF) are compositionally biased toward basic and acidic residues. Residues 1188 to 1203 (GKNSMPTVSFLDQDQS) are compositionally biased toward polar residues. Ser-1203 carries the post-translational modification Phosphoserine. Basic and acidic residues predominate over residues 1222-1232 (DKLHHPLEFAD). The tract at residues 1391–1711 (RVPLLHLRAE…YSYAGLAPRP (321 aa)) is interaction with GAB2. Arg-1523 and Arg-1533 each carry asymmetric dimethylarginine. Ser-1585 carries the post-translational modification Phosphoserine. Positions 1685-2087 (PNRDFAFYNP…QHPETQIHAE (403 aa)) are interaction with FYN. Residues 1798-1896 (PGKTGLLSVA…QFCESKNGPP (99 aa)) form a disordered region. The span at 1823-1838 (GEDRFYRRHPEAEMDR) shows a compositional bias: basic and acidic residues. Over residues 1847–1862 (STQPEKPSLPQKQSSL) the composition is skewed to polar residues. Residues 1875-1889 (PEHRAHQEASHRQFC) show a composition bias toward basic and acidic residues. Residue Arg-2037 is modified to Omega-N-methylarginine.

Belongs to the PX domain-containing GAP family. As to quaternary structure, interacts with NTRK1 (via cytoplasmic domain); the interaction is independent of the phosphorylation state of NTRK1. Interacts with SHC3 (via SH2 domain). Interacts with RASA1 (via SH3 domain); the interaction is necessary for the Ras activation and cell transforming activities of ARHGAP32. Interacts with GAB1 and GAB2. Interacts with CRK and CRKL. Found in a complex with CRKL and BCAR1; upon EGF stimulation BCAR1 may be replaced by EGFR. Interacts with NCK1 (via SH3 domain); NCK1 recruits phosphorylated BCAR1 to the complex. Isoform 2 interacts with FYN; the interaction appears to be dependent on tyrosine phosphorylation of ARHGAP32. Interacts with EGFR; the interaction requires EGF stimulation and is increased by SHC3. Interacts with CDC42; the interaction requires constitutively active CDC42. Interacts with CTNNB1. Interacts with GRIN2B. Interacts with DLG4 and CDH2. Interacts with GPHN. Post-translationally, isoform 2 is phosphorylated on multiple tyrosine residues by FYN. Phosphorylated tyrosine residues undergo dephosphorylation after stimulation of NMDA receptors. Phosphorylated in vitro by CaMK2 in the presence of calmodulin and calcium; which inhibits GAP activity. As to expression, isoform 1 and isoform 2 are highly expressed in brain and testis. Isoform 1 is also expressed in other tissues such as lung, liver and spleen.

It localises to the postsynaptic density. The protein localises to the cell projection. It is found in the dendritic spine. The protein resides in the cytoplasm. Its subcellular location is the cell cortex. It localises to the endosome membrane. The protein localises to the golgi apparatus membrane. It is found in the endoplasmic reticulum membrane. The protein resides in the membrane. Functionally, GTPase-activating protein (GAP) promoting GTP hydrolysis on RHOA, CDC42 and RAC1 small GTPases. May be involved in the differentiation of neuronal cells during the formation of neurite extensions. Involved in NMDA receptor activity-dependent actin reorganization in dendritic spines. May mediate cross-talks between Ras- and Rho-regulated signaling pathways in cell growth regulation. Isoform 2 has higher GAP activity. This chain is Rho GTPase-activating protein 32 (ARHGAP32), found in Homo sapiens (Human).